Reading from the N-terminus, the 693-residue chain is Elongation factor G (693 aa).

The region spanning 8–282 (EKTRNIGIMA…AVIDYLPSPL (275 aa)) is the tr-type G domain. Residues 17–24 (AHVDAGKT), 81–85 (DTPGH), and 135–138 (NKMD) each bind GTP.

The protein belongs to the TRAFAC class translation factor GTPase superfamily. Classic translation factor GTPase family. EF-G/EF-2 subfamily.

Its subcellular location is the cytoplasm. Functionally, catalyzes the GTP-dependent ribosomal translocation step during translation elongation. During this step, the ribosome changes from the pre-translocational (PRE) to the post-translocational (POST) state as the newly formed A-site-bound peptidyl-tRNA and P-site-bound deacylated tRNA move to the P and E sites, respectively. Catalyzes the coordinated movement of the two tRNA molecules, the mRNA and conformational changes in the ribosome. The protein is Elongation factor G of Streptococcus pneumoniae (strain Hungary19A-6).